The primary structure comprises 436 residues: Anaerobic glycerol-3-phosphate dehydrogenase subunit B (436 aa).

It belongs to the anaerobic G-3-P dehydrogenase subunit B family. Composed of a catalytic GlpA/B dimer and of membrane bound GlpC. The cofactor is FMN.

It catalyses the reaction a quinone + sn-glycerol 3-phosphate = dihydroxyacetone phosphate + a quinol. Its pathway is polyol metabolism; glycerol degradation via glycerol kinase pathway; glycerone phosphate from sn-glycerol 3-phosphate (anaerobic route): step 1/1. Functionally, conversion of glycerol 3-phosphate to dihydroxyacetone. Uses fumarate or nitrate as electron acceptor. This chain is Anaerobic glycerol-3-phosphate dehydrogenase subunit B, found in Vibrio cholerae serotype O1 (strain ATCC 39315 / El Tor Inaba N16961).